A 209-amino-acid chain; its full sequence is Kynurenine formamidase (209 aa).

Trp-19 lines the substrate pocket. Zn(2+) is bound by residues His-49, His-53, and Asp-55. The Proton donor/acceptor role is filled by His-59. Zn(2+)-binding residues include His-160 and Glu-172.

Belongs to the Cyclase 1 superfamily. KynB family. As to quaternary structure, homodimer. Requires Zn(2+) as cofactor.

The catalysed reaction is N-formyl-L-kynurenine + H2O = L-kynurenine + formate + H(+). It participates in amino-acid degradation; L-tryptophan degradation via kynurenine pathway; L-kynurenine from L-tryptophan: step 2/2. Functionally, catalyzes the hydrolysis of N-formyl-L-kynurenine to L-kynurenine, the second step in the kynurenine pathway of tryptophan degradation. The protein is Kynurenine formamidase of Ralstonia pickettii (strain 12J).